Here is a 149-residue protein sequence, read N- to C-terminus: Calmodulin (149 aa).

The residue at position 2 (A2) is an N-acetylalanine. EF-hand domains follow at residues 8–43 (EQIS…LGQN), 44–79 (PTEA…KMRD), 81–116 (DSEE…LGEK), and 117–149 (LTDN…MLSK). Ca(2+) is bound by residues D21, D23, D25, T27, E32, D57, D59, N61, T63, E68, D94, D96, N98, Y100, E105, D130, D132, D134, Q136, and E141.

It belongs to the calmodulin family. Post-translationally, trimethylation of Lys-116 observed in other calmodulins is absent here.

Its function is as follows. Calmodulin mediates the control of a large number of enzymes, ion channels and other proteins by Ca(2+). Among the enzymes to be stimulated by the calmodulin-Ca(2+) complex are a number of protein kinases and phosphatases. The polypeptide is Calmodulin (CMD1) (Pleurotus cornucopiae (Cornucopia mushroom)).